We begin with the raw amino-acid sequence, 132 residues long: S-protein homolog 15 (132 aa).

The signal sequence occupies residues 1–20; it reads MSRLIFFILVTAIYFVGNEA.

The protein belongs to the plant self-incompatibility (S1) protein family.

It localises to the secreted. This is S-protein homolog 15 from Arabidopsis thaliana (Mouse-ear cress).